Consider the following 210-residue polypeptide: Thymidylate kinase (210 aa).

Position 10–17 (10–17 (GPEGAGKS)) interacts with ATP.

This sequence belongs to the thymidylate kinase family.

It carries out the reaction dTMP + ATP = dTDP + ADP. Phosphorylation of dTMP to form dTDP in both de novo and salvage pathways of dTTP synthesis. The polypeptide is Thymidylate kinase (Pseudomonas paraeruginosa (strain DSM 24068 / PA7) (Pseudomonas aeruginosa (strain PA7))).